The chain runs to 411 residues: 2,3-bisphosphoglycerate-independent phosphoglycerate mutase (411 aa).

Residues 164 to 190 form a disordered region; that stretch reads VSSNDPKKEGVQPLTIRPGSDDPADAK.

It belongs to the BPG-independent phosphoglycerate mutase family. A-PGAM subfamily.

It catalyses the reaction (2R)-2-phosphoglycerate = (2R)-3-phosphoglycerate. It participates in carbohydrate degradation; glycolysis; pyruvate from D-glyceraldehyde 3-phosphate: step 3/5. Functionally, catalyzes the interconversion of 2-phosphoglycerate and 3-phosphoglycerate. The polypeptide is 2,3-bisphosphoglycerate-independent phosphoglycerate mutase (Methanoculleus marisnigri (strain ATCC 35101 / DSM 1498 / JR1)).